Here is a 464-residue protein sequence, read N- to C-terminus: Soluble pyridine nucleotide transhydrogenase (464 aa).

35–44 (DDRRQVGGNC) serves as a coordination point for FAD.

This sequence belongs to the class-I pyridine nucleotide-disulfide oxidoreductase family. FAD is required as a cofactor.

The protein resides in the cytoplasm. The catalysed reaction is NAD(+) + NADPH = NADH + NADP(+). Functionally, conversion of NADPH, generated by peripheral catabolic pathways, to NADH, which can enter the respiratory chain for energy generation. This chain is Soluble pyridine nucleotide transhydrogenase, found in Pseudomonas putida (strain ATCC 47054 / DSM 6125 / CFBP 8728 / NCIMB 11950 / KT2440).